The sequence spans 206 residues: Thiamine-phosphate synthase (206 aa).

Residues 35-39 (QLRDK) and Asn-67 each bind 4-amino-2-methyl-5-(diphosphooxymethyl)pyrimidine. 2 residues coordinate Mg(2+): Asp-68 and Asp-87. Position 106 (Ser-106) interacts with 4-amino-2-methyl-5-(diphosphooxymethyl)pyrimidine. 132-134 (TGT) contributes to the 2-[(2R,5Z)-2-carboxy-4-methylthiazol-5(2H)-ylidene]ethyl phosphate binding site. Lys-135 is a binding site for 4-amino-2-methyl-5-(diphosphooxymethyl)pyrimidine. Residues Gly-163 and 183-184 (IS) each bind 2-[(2R,5Z)-2-carboxy-4-methylthiazol-5(2H)-ylidene]ethyl phosphate.

It belongs to the thiamine-phosphate synthase family. It depends on Mg(2+) as a cofactor.

The catalysed reaction is 2-[(2R,5Z)-2-carboxy-4-methylthiazol-5(2H)-ylidene]ethyl phosphate + 4-amino-2-methyl-5-(diphosphooxymethyl)pyrimidine + 2 H(+) = thiamine phosphate + CO2 + diphosphate. The enzyme catalyses 2-(2-carboxy-4-methylthiazol-5-yl)ethyl phosphate + 4-amino-2-methyl-5-(diphosphooxymethyl)pyrimidine + 2 H(+) = thiamine phosphate + CO2 + diphosphate. It catalyses the reaction 4-methyl-5-(2-phosphooxyethyl)-thiazole + 4-amino-2-methyl-5-(diphosphooxymethyl)pyrimidine + H(+) = thiamine phosphate + diphosphate. Its pathway is cofactor biosynthesis; thiamine diphosphate biosynthesis; thiamine phosphate from 4-amino-2-methyl-5-diphosphomethylpyrimidine and 4-methyl-5-(2-phosphoethyl)-thiazole: step 1/1. In terms of biological role, condenses 4-methyl-5-(beta-hydroxyethyl)thiazole monophosphate (THZ-P) and 2-methyl-4-amino-5-hydroxymethyl pyrimidine pyrophosphate (HMP-PP) to form thiamine monophosphate (TMP). In Methanospirillum hungatei JF-1 (strain ATCC 27890 / DSM 864 / NBRC 100397 / JF-1), this protein is Thiamine-phosphate synthase.